We begin with the raw amino-acid sequence, 1409 residues long: Copia protein (1409 aa).

A CCHC-type zinc finger spans residues 230-247; that stretch reads VKCHHCGREGHIKKDCFH. D292 acts as the For protease activity in catalysis. Residues 476–644 enclose the Integrase catalytic domain; that stretch reads HIKRPLFVVH…TPYEMWHNKK (169 aa). Disordered regions lie at residues 760-780 and 805-851; these read SKESENKNFPNDSRKIIQTEF and NESK…NDGI. Residues 827 to 841 show a composition bias toward basic and acidic residues; it reads ESRESETAEHLKEIG.

In Drosophila melanogaster (Fruit fly), this protein is Copia protein (GIP).